The primary structure comprises 540 residues: Alanine aminotransferase 2 (540 aa).

N6-(pyridoxal phosphate)lysine is present on Lys-358.

Belongs to the class-I pyridoxal-phosphate-dependent aminotransferase family. Alanine aminotransferase subfamily. As to quaternary structure, homodimer. The cofactor is pyridoxal 5'-phosphate.

It carries out the reaction L-alanine + 2-oxoglutarate = pyruvate + L-glutamate. Its pathway is amino-acid degradation; L-alanine degradation via transaminase pathway; pyruvate from L-alanine: step 1/1. Functionally, catalyzes the reversible transamination between alanine and 2-oxoglutarate to form pyruvate and glutamate. This Xenopus laevis (African clawed frog) protein is Alanine aminotransferase 2 (gpt2).